Reading from the N-terminus, the 366-residue chain is Aminomethyltransferase (366 aa).

Belongs to the GcvT family. As to quaternary structure, the glycine cleavage system is composed of four proteins: P, T, L and H.

The enzyme catalyses N(6)-[(R)-S(8)-aminomethyldihydrolipoyl]-L-lysyl-[protein] + (6S)-5,6,7,8-tetrahydrofolate = N(6)-[(R)-dihydrolipoyl]-L-lysyl-[protein] + (6R)-5,10-methylene-5,6,7,8-tetrahydrofolate + NH4(+). The glycine cleavage system catalyzes the degradation of glycine. This is Aminomethyltransferase from Sodalis glossinidius (strain morsitans).